The primary structure comprises 229 residues: Synaptogyrin-3 (229 aa).

The residue at position 1 (methionine 1) is an N-acetylmethionine. An MARVEL domain is found at 20–172 (FARRPQTLLR…LTVKALQRFR (153 aa)). Transmembrane regions (helical) follow at residues 30-50 (VASW…GYVN), 70-90 (FGVA…LLDV), 105-125 (VLLD…GFCF), and 148-168 (AAIA…VKAL). The segment covering 209-219 (QSPPFTETLDT) has biased composition (polar residues). Residues 209–229 (QSPPFTETLDTSPKGYQVPAY) are disordered.

It belongs to the synaptogyrin family. In terms of assembly, interacts (via N-terminus) with SLC6A3 (via N-terminus). May interact with VMAT2. As to expression, expressed in brain and placenta.

The protein resides in the cytoplasmic vesicle. Its subcellular location is the secretory vesicle. It localises to the synaptic vesicle membrane. The protein localises to the synapse. In terms of biological role, may play a role in regulated exocytosis. May indirectly regulate the activity of the plasma membrane dopamine transporter SLC6A3 and thereby regulate dopamine transport back from the synaptic cleft into the presynaptic terminal. The protein is Synaptogyrin-3 of Homo sapiens (Human).